The following is a 309-amino-acid chain: Probable 2,4-dienoyl-CoA reductase decr-1.2 [(3E)-enoyl-CoA-producing] (309 aa).

NADP(+)-binding positions include 28-60, 32-37, Arg57, and Asp83; these read VLVT…RRME and GGGTGI. Arg57 contacts substrate. Substrate is bound by residues Phe116 and Ser124. The active-site Proton acceptor is Tyr166. NADP(+) is bound by residues Lys181 and 207–210; that span reads PGPI. Position 218 (Arg218) interacts with substrate.

It belongs to the short-chain dehydrogenases/reductases (SDR) family. 2,4-dienoyl-CoA reductase subfamily.

The catalysed reaction is a (2E,4E)-dienoyl-CoA + NADPH + H(+) = a 4,5-saturated-(3E)-enoyl-CoA + NADP(+). It catalyses the reaction a (2E,4Z)-dienoyl-CoA + NADPH + H(+) = a 4,5-saturated-(3E)-enoyl-CoA + NADP(+). In terms of biological role, auxiliary enzyme of beta-oxidation. It participates in the metabolism of unsaturated fatty enoyl-CoA esters having double bonds in both even- and odd-numbered positions. Catalyzes the NADP-dependent reduction of 2,4-dienoyl-CoA to yield trans-3-enoyl-CoA. The chain is Probable 2,4-dienoyl-CoA reductase decr-1.2 [(3E)-enoyl-CoA-producing] from Caenorhabditis elegans.